The primary structure comprises 463 residues: Chromosomal replication initiator protein DnaA (463 aa).

Residues Met1–Ile84 form a domain I, interacts with DnaA modulators region. The segment at Ile84–Ser124 is domain II. A domain III, AAA+ region region spans residues Thr125 to Ser343. Positions 171, 173, 174, and 175 each coordinate ATP. Residues Asn344–Asn463 are domain IV, binds dsDNA.

The protein belongs to the DnaA family. In terms of assembly, oligomerizes as a right-handed, spiral filament on DNA at oriC.

Its subcellular location is the cytoplasm. In terms of biological role, plays an essential role in the initiation and regulation of chromosomal replication. ATP-DnaA binds to the origin of replication (oriC) to initiate formation of the DNA replication initiation complex once per cell cycle. Binds the DnaA box (a 9 base pair repeat at the origin) and separates the double-stranded (ds)DNA. Forms a right-handed helical filament on oriC DNA; dsDNA binds to the exterior of the filament while single-stranded (ss)DNA is stabiized in the filament's interior. The ATP-DnaA-oriC complex binds and stabilizes one strand of the AT-rich DNA unwinding element (DUE), permitting loading of DNA polymerase. After initiation quickly degrades to an ADP-DnaA complex that is not apt for DNA replication. Binds acidic phospholipids. This is Chromosomal replication initiator protein DnaA from Rickettsia bellii (strain RML369-C).